Here is a 183-residue protein sequence, read N- to C-terminus: Large ribosomal subunit protein uL5 (183 aa).

Belongs to the universal ribosomal protein uL5 family. In terms of assembly, part of the 50S ribosomal subunit; part of the 5S rRNA/L5/L18/L25 subcomplex. Contacts the 5S rRNA and the P site tRNA. Forms a bridge to the 30S subunit in the 70S ribosome.

Functionally, this is one of the proteins that bind and probably mediate the attachment of the 5S RNA into the large ribosomal subunit, where it forms part of the central protuberance. In the 70S ribosome it contacts protein S13 of the 30S subunit (bridge B1b), connecting the 2 subunits; this bridge is implicated in subunit movement. Contacts the P site tRNA; the 5S rRNA and some of its associated proteins might help stabilize positioning of ribosome-bound tRNAs. In Flavobacterium johnsoniae (strain ATCC 17061 / DSM 2064 / JCM 8514 / BCRC 14874 / CCUG 350202 / NBRC 14942 / NCIMB 11054 / UW101) (Cytophaga johnsonae), this protein is Large ribosomal subunit protein uL5.